The following is a 67-amino-acid chain: DNA-directed RNA polymerase subunit omega (67 aa).

This sequence belongs to the RNA polymerase subunit omega family. The RNAP catalytic core consists of 2 alpha, 1 beta, 1 beta' and 1 omega subunit. When a sigma factor is associated with the core the holoenzyme is formed, which can initiate transcription.

The enzyme catalyses RNA(n) + a ribonucleoside 5'-triphosphate = RNA(n+1) + diphosphate. In terms of biological role, promotes RNA polymerase assembly. Latches the N- and C-terminal regions of the beta' subunit thereby facilitating its interaction with the beta and alpha subunits. The polypeptide is DNA-directed RNA polymerase subunit omega (Cupriavidus metallidurans (strain ATCC 43123 / DSM 2839 / NBRC 102507 / CH34) (Ralstonia metallidurans)).